A 347-amino-acid chain; its full sequence is Probable RNA methyltransferase azo0122 (347 aa).

The active-site Proton acceptor is the E89. Residues 92–318 (LLLRDGLCVS…AKLRQSAGQD (227 aa)) enclose the Radical SAM core domain. Cysteines 99 and 323 form a disulfide. Residues C106, C110, and C113 each coordinate [4Fe-4S] cluster. S-adenosyl-L-methionine contacts are provided by residues 151-152 (GE), S181, 204-206 (SLH), and N280. The active-site S-methylcysteine intermediate is C323.

It belongs to the radical SAM superfamily. RlmN family. [4Fe-4S] cluster serves as cofactor.

The protein resides in the cytoplasm. The sequence is that of Probable RNA methyltransferase azo0122 from Azoarcus sp. (strain BH72).